We begin with the raw amino-acid sequence, 303 residues long: Sulfotransferase 6B1 (303 aa).

65 to 70 serves as a coordination point for 3'-phosphoadenylyl sulfate; that stretch reads KCGSNW. His118 acts as the Proton acceptor in catalysis. 3'-phosphoadenylyl sulfate-binding positions include Arg140, Ser148, Tyr203, 237–242, and 259–261; these read STFQAM and RKG.

Belongs to the sulfotransferase 1 family.

The protein localises to the cytoplasm. It localises to the cytosol. It catalyses the reaction thyroxine + 3'-phosphoadenylyl sulfate = thyroxine sulfate + adenosine 3',5'-bisphosphate + H(+). Functionally, sulfotransferase that utilizes 3'-phospho-5'-adenylyl sulfate (PAPS) as sulfonate donor to catalyze the sulfate conjugation of thyroxine. Involved in the metabolism of thyroxine. This Pan troglodytes (Chimpanzee) protein is Sulfotransferase 6B1 (SULT6B1).